We begin with the raw amino-acid sequence, 288 residues long: Probable chromosome 1-partitioning protein ParB (288 aa).

This sequence belongs to the ParB family.

In terms of biological role, involved in chromosome partition. Localize to both poles of the predivisional cell following completion of DNA replication. Binds to the DNA origin of replication. This chain is Probable chromosome 1-partitioning protein ParB (parB1), found in Deinococcus radiodurans (strain ATCC 13939 / DSM 20539 / JCM 16871 / CCUG 27074 / LMG 4051 / NBRC 15346 / NCIMB 9279 / VKM B-1422 / R1).